The sequence spans 297 residues: Alpha-tubulin N-acetyltransferase 1 (297 aa).

The 186-residue stretch at 1–186 folds into the N-acetyltransferase domain; the sequence is MEFDFDVHKI…NNFVVFDGFF (186 aa). Acetyl-CoA-binding positions include 120–133 and 156–165; these read FYIH…GFGK and SEKFLSFLRK. Residues 269–297 are disordered; that stretch reads LHRTANSEQEDHSQRRRTSSLNRPQSIHH. Residues 287-297 are compositionally biased toward polar residues; sequence SSLNRPQSIHH.

Belongs to the acetyltransferase ATAT1 family.

It localises to the cytoplasm. It is found in the membrane. The protein resides in the clathrin-coated pit. Its subcellular location is the cell junction. The protein localises to the focal adhesion. It localises to the cell projection. It is found in the axon. The protein resides in the cytoskeleton. Its subcellular location is the spindle. The catalysed reaction is L-lysyl-[alpha-tubulin] + acetyl-CoA = N(6)-acetyl-L-lysyl-[alpha-tubulin] + CoA + H(+). Specifically acetylates 'Lys-40' in alpha-tubulin on the lumenal side of microtubules. Promotes microtubule destabilization and accelerates microtubule dynamics; this activity may be independent of acetylation activity. Acetylates alpha-tubulin with a slow enzymatic rate, due to a catalytic site that is not optimized for acetyl transfer. Enters the microtubule through each end and diffuses quickly throughout the lumen of microtubules. Acetylates only long/old microtubules because of its slow acetylation rate since it does not have time to act on dynamically unstable microtubules before the enzyme is released. May be involved in neuron development. This chain is Alpha-tubulin N-acetyltransferase 1, found in Xenopus tropicalis (Western clawed frog).